A 479-amino-acid polypeptide reads, in one-letter code: Serralysin C (479 aa).

A propeptide spanning residues 1-17 (MGKNLSLRQDDAQHALS) is cleaved from the precursor. His188 contacts Zn(2+). Glu189 is a catalytic residue. Zn(2+)-binding residues include His192 and Tyr228. Arg265, Gly267, Asp297, Gly299, Gly300, Asp302, Thr339, Glu341, Gly346, Gly348, Asp350, Asn355, Ala357, Asn359, Gly363, Gly364, Ala365, Gly366, Asp368, Gly372, Gly373, Gly375, Asp377, Gly381, Gly382, Ala383, Gly384, Asp386, Asp395, Asp402, and Asp412 together coordinate Ca(2+). Hemolysin-type calcium-binding repeat units lie at residues 344-361 (IGGSGNDILVGNSADNIL), 362-379 (QGGAGNDVLYGGAGADTL), and 380-397 (YGGAGRDTFVYGSGQDST).

The protein belongs to the peptidase M10B family. Requires Ca(2+) as cofactor. The cofactor is Zn(2+).

The protein localises to the secreted. It carries out the reaction Preferential cleavage of bonds with hydrophobic residues in P1'.. In Dickeya chrysanthemi (Pectobacterium chrysanthemi), this protein is Serralysin C (prtC).